A 73-amino-acid chain; its full sequence is Conotoxin Leo-O2 (73 aa).

An N-terminal signal peptide occupies residues Met1–Ala22. A propeptide spanning residues Asp23 to Arg47 is cleaved from the precursor. 3 disulfides stabilise this stretch: Cys49/Cys59, Cys56/Cys64, and Cys58/Cys69.

Belongs to the conotoxin O1 superfamily. Expressed by the venom duct.

The protein localises to the secreted. The polypeptide is Conotoxin Leo-O2 (Conus leopardus (Leopard cone)).